Reading from the N-terminus, the 226-residue chain is Ribonuclease HII (226 aa).

The 193-residue stretch at 24–216 (QRLCGVDEAG…VRKVLERGMV (193 aa)) folds into the RNase H type-2 domain. 3 residues coordinate a divalent metal cation: aspartate 30, glutamate 31, and aspartate 125.

This sequence belongs to the RNase HII family. Mn(2+) serves as cofactor. It depends on Mg(2+) as a cofactor.

The protein localises to the cytoplasm. It catalyses the reaction Endonucleolytic cleavage to 5'-phosphomonoester.. In terms of biological role, endonuclease that specifically degrades the RNA of RNA-DNA hybrids. In Cupriavidus metallidurans (strain ATCC 43123 / DSM 2839 / NBRC 102507 / CH34) (Ralstonia metallidurans), this protein is Ribonuclease HII.